Reading from the N-terminus, the 271-residue chain is Oligodendrocyte transcription factor 1 (271 aa).

The tract at residues 38 to 117 (YRQPPSSSSS…RKINSRERKR (80 aa)) is disordered. A compositionally biased stretch (low complexity) spans 43-61 (SSSSSSTSSTSSTSSSSTT). Positions 105 to 164 (QLRRKINSRERKRMQDLNLAMDALREVILPYSAAHCQGAPGRKLSKIATLLLARNYILLL) constitute a bHLH domain.

As to expression, expressed in the brain, in oligodendrocytes. Strongly expressed in oligodendrogliomas, while expression is weak to moderate in astrocytomas. Expression in glioblastomas is highly variable.

It localises to the nucleus. Its function is as follows. Promotes formation and maturation of oligodendrocytes, especially within the brain. Cooperates with OLIG2 to establish the pMN domain of the embryonic neural tube. The polypeptide is Oligodendrocyte transcription factor 1 (OLIG1) (Homo sapiens (Human)).